The primary structure comprises 287 residues: Proteasome subunit alpha (287 aa).

The interval 241-287 (GVVAGEEPHTAAHAPSVPQPGAPAGLGDPGAPDTGGTAGSGGEAPTT) is disordered. The span at 262-275 (APAGLGDPGAPDTG) shows a compositional bias: low complexity. Positions 276-287 (GTAGSGGEAPTT) are enriched in gly residues.

Belongs to the peptidase T1A family. In terms of assembly, the 20S proteasome core is composed of 14 alpha and 14 beta subunits that assemble into four stacked heptameric rings, resulting in a barrel-shaped structure. The two inner rings, each composed of seven catalytic beta subunits, are sandwiched by two outer rings, each composed of seven alpha subunits. The catalytic chamber with the active sites is on the inside of the barrel. Has a gated structure, the ends of the cylinder being occluded by the N-termini of the alpha-subunits. Is capped by the proteasome-associated ATPase, ARC.

Its subcellular location is the cytoplasm. The protein operates within protein degradation; proteasomal Pup-dependent pathway. Its activity is regulated as follows. The formation of the proteasomal ATPase ARC-20S proteasome complex, likely via the docking of the C-termini of ARC into the intersubunit pockets in the alpha-rings, may trigger opening of the gate for substrate entry. Interconversion between the open-gate and close-gate conformations leads to a dynamic regulation of the 20S proteasome proteolysis activity. In terms of biological role, component of the proteasome core, a large protease complex with broad specificity involved in protein degradation. The sequence is that of Proteasome subunit alpha from Geodermatophilus obscurus (strain ATCC 25078 / DSM 43160 / JCM 3152 / CCUG 61914 / KCC A-0152 / KCTC 9177 / NBRC 13315 / NRRL B-3577 / G-20).